A 444-amino-acid chain; its full sequence is DNA primase DnaG (444 aa).

The Toprim domain maps to 186–260; sequence DSIIVVEGRN…EVDFVARAPP (75 aa). Mg(2+) is bound by residues Glu192, Asp234, and Asp236.

Belongs to the archaeal DnaG primase family. Forms a ternary complex with MCM helicase and DNA. Component of the archaeal exosome complex. Mg(2+) is required as a cofactor.

The enzyme catalyses ssDNA + n NTP = ssDNA/pppN(pN)n-1 hybrid + (n-1) diphosphate.. RNA polymerase that catalyzes the synthesis of short RNA molecules used as primers for DNA polymerase during DNA replication. Also part of the exosome, which is a complex involved in RNA degradation. Acts as a poly(A)-binding protein that enhances the interaction between heteromeric, adenine-rich transcripts and the exosome. This Thermoplasma volcanium (strain ATCC 51530 / DSM 4299 / JCM 9571 / NBRC 15438 / GSS1) protein is DNA primase DnaG.